Reading from the N-terminus, the 176-residue chain is Protein GrpE (176 aa).

The interval 1–31 is disordered; the sequence is MSEQKQEFENENAENSEHLQDENLQNIEDVE.

This sequence belongs to the GrpE family. Homodimer.

Its subcellular location is the cytoplasm. Its function is as follows. Participates actively in the response to hyperosmotic and heat shock by preventing the aggregation of stress-denatured proteins, in association with DnaK and GrpE. It is the nucleotide exchange factor for DnaK and may function as a thermosensor. Unfolded proteins bind initially to DnaJ; upon interaction with the DnaJ-bound protein, DnaK hydrolyzes its bound ATP, resulting in the formation of a stable complex. GrpE releases ADP from DnaK; ATP binding to DnaK triggers the release of the substrate protein, thus completing the reaction cycle. Several rounds of ATP-dependent interactions between DnaJ, DnaK and GrpE are required for fully efficient folding. The chain is Protein GrpE from Campylobacter jejuni subsp. doylei (strain ATCC BAA-1458 / RM4099 / 269.97).